Consider the following 445-residue polypeptide: Hydroxycinnamoyl-CoA:5-hydroxyanthranilate N-hydroxycinnamoyltransferase HHT4 (445 aa).

The protein belongs to the plant acyltransferase family.

It carries out the reaction 5-hydroxyanthranilate + (E)-4-coumaroyl-CoA = avenanthramide A + CoA. It catalyses the reaction 5-hydroxyanthranilate + (E)-caffeoyl-CoA = avenanthramide C + CoA. Involved in the biosynthesis of avenanthramide phytoalexins, which are phenolic alkaloids found mainly in oats. Catalyzes the N-acylation of 5-hydroxyanthranilate with 4-coumaroyl-CoA or caffeoyl-CoA as acyl donors, forming avenanthramide A and avenanthramide C, respectively. Does not accept feruloyl-CoA as a substrate. This Avena sativa (Oat) protein is Hydroxycinnamoyl-CoA:5-hydroxyanthranilate N-hydroxycinnamoyltransferase HHT4.